The sequence spans 647 residues: 5-aminolevulinate synthase, non-specific, mitochondrial (647 aa).

The N-terminal 56 residues, 1 to 56 (METVVRRCPFLSRVPQAFLQKAGKSLLFYAQNCPKMMEIGAKPAPRALSTSAVLCQ), are a transit peptide targeting the mitochondrion. The tract at residues 61–112 (TPPANEKDKAAKAEVQQAPDGSQQAPDGSQQTADGTQLPSGHPSLASSQGTG) is disordered. The span at 79 to 112 (PDGSQQAPDGSQQTADGTQLPSGHPSLASSQGTG) shows a compositional bias: polar residues. 3 residues coordinate substrate: R224, S341, and K360. S393, H421, and T449 together coordinate pyridoxal 5'-phosphate. The active site involves K452. K452 carries the post-translational modification N6-(pyridoxal phosphate)lysine. Residues T481 and T482 each coordinate pyridoxal 5'-phosphate. T569 contributes to the substrate binding site. At P583 the chain carries Hydroxyproline.

The protein belongs to the class-II pyridoxal-phosphate-dependent aminotransferase family. Homodimer. Interacts (hydroxylated form) with VHL. Pyridoxal 5'-phosphate is required as a cofactor. Post-translationally, in normoxia, is hydroxylated at Pro-583, promoting interaction with VHL, initiating ubiquitination and subsequent degradation via the proteasome. Ubiquitinated; in normoxia following hydroxylation and interaction with VHL, leading to its subsequent degradation via the proteasome.

The protein resides in the mitochondrion inner membrane. The catalysed reaction is succinyl-CoA + glycine + H(+) = 5-aminolevulinate + CO2 + CoA. Its pathway is porphyrin-containing compound metabolism; protoporphyrin-IX biosynthesis; 5-aminolevulinate from glycine: step 1/1. Catalyzes the pyridoxal 5'-phosphate (PLP)-dependent condensation of succinyl-CoA and glycine to form aminolevulinic acid (ALA), with CoA and CO2 as by-products. This chain is 5-aminolevulinate synthase, non-specific, mitochondrial (ALAS1), found in Bos taurus (Bovine).